The primary structure comprises 250 residues: uncharacterized protein (250 aa).

3 residues coordinate a divalent metal cation: Glu-97, Glu-99, and Asp-128.

It belongs to the FAH family.

This is an uncharacterized protein from Archaeoglobus fulgidus (strain ATCC 49558 / DSM 4304 / JCM 9628 / NBRC 100126 / VC-16).